The primary structure comprises 370 residues: DNA replication and repair protein RecF (370 aa).

Glycine 30–threonine 37 is an ATP binding site.

It belongs to the RecF family.

It is found in the cytoplasm. In terms of biological role, the RecF protein is involved in DNA metabolism; it is required for DNA replication and normal SOS inducibility. RecF binds preferentially to single-stranded, linear DNA. It also seems to bind ATP. This Bacteroides fragilis (strain ATCC 25285 / DSM 2151 / CCUG 4856 / JCM 11019 / LMG 10263 / NCTC 9343 / Onslow / VPI 2553 / EN-2) protein is DNA replication and repair protein RecF.